The sequence spans 661 residues: MEARVAEAAARLARQENEIKSLTAEIEHLKNFGCLGISPSLEGLRDENAKLKYRLNFLQKSLQEEQSKTVKSMININSRLQEIFGAAIQAAYPELENPPLVVTPSQQPKFGDYQCNSAMGITQILLKTKEQKVSPREIAEKITKHIPANECIEKVEIAGPGFINVHLRKDFVSKQLSSLLVNGVQPPAIGKRKKVILDFSSPNIAKEMHVGHLRSTIIGESMCRLFEFAGYDVLRLNHLGDWGTQFGMLIAHLQDRFPDYLTVSPPIGDLQAFYKESKRRFDTEEEFKKRAYQCVVLLQSKDPDFIKAWELICDVSRKEFQKIYNCLDVTLTERGESFYQDMMKDIVKEFEDKGFVQVDDGRKIVFVPGFSVPLTIMKSDGGYTYDTSDLAALRHRLLEEKGDILIYVVDSGQSVHLQTVFAAGQMIGWYDPKVTRITHAAFGVVLGEDKKKFKTRSGDTVRLMDLLEEGLKRAMDKLKDKERDKVLTPEELKAAQMSVAFGCIKYADLSHNRLNDYVFSFDKMLDDRGNTAAYLLYAFTRIRAIARLANIDEGMLRKAAREEVIVLDHEKEWKLGKCILRFPEILQKILDDLLLHTLCDYLYELATTFTEFYDNCYCVEKDRQSGQIMKVNTWRLLLCEATATIMAKGFDILGIKPVERM.

Positions 1 to 72 are could be involved in the assembly of the multisynthetase complex; that stretch reads MEARVAEAAA…QEEQSKTVKS (72 aa). L-arginine is bound by residues 201–203, H212, Y385, D389, and Q413; that span reads SPN. Positions 202 to 213 match the 'HIGH' region motif; it reads PNIAKEMHVGHL. The tract at residues 530-544 is interaction with tRNA; it reads NTAAYLLYAFTRIRA.

The protein belongs to the class-I aminoacyl-tRNA synthetase family. Monomer; also part of a multisubunit complex that groups tRNA ligases for Arg, Asp, Glu, Gln, Ile, Leu, Lys, Met and Pro.

Its subcellular location is the cytoplasm. The protein localises to the cytosol. The catalysed reaction is tRNA(Arg) + L-arginine + ATP = L-arginyl-tRNA(Arg) + AMP + diphosphate. In terms of biological role, forms part of a macromolecular complex that catalyzes the attachment of specific amino acids to cognate tRNAs during protein synthesis. This is Arginine--tRNA ligase, cytoplasmic (RARS1) from Gallus gallus (Chicken).